Reading from the N-terminus, the 240-residue chain is MELYNIKYAIDPTNKIVIEQVDNVDAFVHILEPGQEVFDETLSQYHQFPGVVSSIIFPQLVLNTIISVLSEDGSLLTLKLENTCFNFHVCNKRFVFGNLPAAVVNNETKQKLRIGAPIFAGKKLVSVVTAFHRVGENEWLLPVTGIREASQLSGHMKVLNGVRVEKWRPNMSVYGTVQLPYDKIKQHALEQENKTPNALESCVLFYKDSEIRITYNKGDYEIMHLRMPGPLIQPNTIYYS.

The Proton donor role is filled by H46. Y181 serves as the catalytic Shared with catalytic histidine of dimeric partner. K185 (proton acceptor; shared with catalytic histidine of dimeric partner) is an active-site residue.

This sequence belongs to the poxin family. In terms of assembly, homodimer.

It catalyses the reaction 2',3'-cGAMP + H2O = Gp(2'-5')Ap(3') + H(+). In terms of biological role, nuclease that cleaves host 2',3'-cGAMP. The polypeptide is Poxin (P26) (Lepidoptera (butterflies and moths)).